The chain runs to 374 residues: 4-hydroxy-3-methylbut-2-en-1-yl diphosphate synthase (flavodoxin) (374 aa).

[4Fe-4S] cluster is bound by residues C268, C271, C303, and E310.

This sequence belongs to the IspG family. Requires [4Fe-4S] cluster as cofactor.

The catalysed reaction is (2E)-4-hydroxy-3-methylbut-2-enyl diphosphate + oxidized [flavodoxin] + H2O + 2 H(+) = 2-C-methyl-D-erythritol 2,4-cyclic diphosphate + reduced [flavodoxin]. Its pathway is isoprenoid biosynthesis; isopentenyl diphosphate biosynthesis via DXP pathway; isopentenyl diphosphate from 1-deoxy-D-xylulose 5-phosphate: step 5/6. Its function is as follows. Converts 2C-methyl-D-erythritol 2,4-cyclodiphosphate (ME-2,4cPP) into 1-hydroxy-2-methyl-2-(E)-butenyl 4-diphosphate. The chain is 4-hydroxy-3-methylbut-2-en-1-yl diphosphate synthase (flavodoxin) from Geobacillus thermodenitrificans (strain NG80-2).